We begin with the raw amino-acid sequence, 348 residues long: Probable dual-specificity RNA methyltransferase RlmN (348 aa).

Glu89 functions as the Proton acceptor in the catalytic mechanism. The Radical SAM core domain occupies 95 to 328 (HKNRNTVCVS…VTLRISYGSK (234 aa)). A disulfide bond links Cys102 and Cys333. Cys109, Cys113, and Cys116 together coordinate [4Fe-4S] cluster. S-adenosyl-L-methionine is bound by residues 159–160 (GE), Ser191, 214–216 (SLH), and Asn290. Cys333 functions as the S-methylcysteine intermediate in the catalytic mechanism.

Belongs to the radical SAM superfamily. RlmN family. The cofactor is [4Fe-4S] cluster.

It is found in the cytoplasm. The enzyme catalyses adenosine(2503) in 23S rRNA + 2 reduced [2Fe-2S]-[ferredoxin] + 2 S-adenosyl-L-methionine = 2-methyladenosine(2503) in 23S rRNA + 5'-deoxyadenosine + L-methionine + 2 oxidized [2Fe-2S]-[ferredoxin] + S-adenosyl-L-homocysteine. It catalyses the reaction adenosine(37) in tRNA + 2 reduced [2Fe-2S]-[ferredoxin] + 2 S-adenosyl-L-methionine = 2-methyladenosine(37) in tRNA + 5'-deoxyadenosine + L-methionine + 2 oxidized [2Fe-2S]-[ferredoxin] + S-adenosyl-L-homocysteine. Functionally, specifically methylates position 2 of adenine 2503 in 23S rRNA and position 2 of adenine 37 in tRNAs. The sequence is that of Probable dual-specificity RNA methyltransferase RlmN from Dictyoglomus turgidum (strain DSM 6724 / Z-1310).